Consider the following 89-residue polypeptide: Small ribosomal subunit protein uS15 (89 aa).

It belongs to the universal ribosomal protein uS15 family. Part of the 30S ribosomal subunit. Forms a bridge to the 50S subunit in the 70S ribosome, contacting the 23S rRNA.

Functionally, one of the primary rRNA binding proteins, it binds directly to 16S rRNA where it helps nucleate assembly of the platform of the 30S subunit by binding and bridging several RNA helices of the 16S rRNA. Forms an intersubunit bridge (bridge B4) with the 23S rRNA of the 50S subunit in the ribosome. This is Small ribosomal subunit protein uS15 from Acinetobacter baylyi (strain ATCC 33305 / BD413 / ADP1).